Reading from the N-terminus, the 192-residue chain is Sarcoplasmic calcium-binding protein, beta chain (192 aa).

Alanine 1 carries the post-translational modification N-acetylalanine. 4 consecutive EF-hand domains span residues 4-39, 56-91, 100-135, and 136-171; these read WDNR…VTLI, IMAN…NCKG, AFKV…RSAF, and ADVK…YAQF. 14 residues coordinate Ca(2+): aspartate 17, aspartate 19, aspartate 21, aspartate 28, aspartate 69, asparagine 71, aspartate 73, glutamate 75, glutamate 80, aspartate 113, aspartate 115, aspartate 117, methionine 119, and glutamate 124.

As to quaternary structure, SCPs from crayfish, lobster, and shrimp are polymorphic dimers; three isotypes (alpha-alpha, alpha-beta, and beta-beta) have been identified.

In terms of biological role, like parvalbumins, SCPs seem to be more abundant in fast contracting muscles, but no functional relationship can be established from this distribution. This chain is Sarcoplasmic calcium-binding protein, beta chain, found in Penaeus sp. (Penoeid shrimp).